A 925-amino-acid polypeptide reads, in one-letter code: Collagen alpha-2(I) chain (925 aa).

The disordered stretch occupies residues 1 to 925 (SGGFDFSFLP…FGYEGDFYRA (925 aa)). 2 positions are modified to 4-hydroxyproline: Pro-10 and Pro-13. The segment covering 22–34 (RYYGVGLGPGPMG) has biased composition (gly residues). Residues 35-74 (LMGPRGPPGASGAPGPQGFQGPAGEPGEPGQTGPAGARGP) are compositionally biased toward low complexity. A 4-hydroxyproline mark is found at Pro-42 and Pro-48. The residue at position 103 (Lys-103) is a 5-hydroxylysine; alternate. O-linked (Gal...) hydroxylysine; alternate glycosylation is present at Lys-103. Over residues 154–171 (DGSVGPVGPAGPIGSAGP) the composition is skewed to low complexity. Over residues 271-280 (GESGGKGEPG) the composition is skewed to gly residues. Low complexity predominate over residues 281–291 (SAGPQGPPGSS). Gly residues predominate over residues 306-315 (GLRGGPGSRG). Residues Pro-317, Pro-332, and Pro-335 each carry the 4-hydroxyproline modification. Low complexity predominate over residues 363-379 (IDGRPGPIGPAGARGEA). Residues 423–432 (GVQGGKGEQG) show a composition bias toward gly residues. Low complexity-rich tracts occupy residues 479–496 (PGES…SRGP) and 508–518 (EPGVVGAPGTA). The span at 519-528 (GPAGSGGLPG) shows a compositional bias: gly residues. 2 stretches are compositionally biased toward low complexity: residues 551–595 (VGTT…PRGS) and 602–622 (VGPA…QPGA). A compositionally biased stretch (basic and acidic residues) spans 623–632 (KGERGTKGPK). Low complexity predominate over residues 640–650 (PTGPVGSAGPA). The segment covering 660-669 (GSRGDGGPPG) has biased composition (gly residues). Low complexity predominate over residues 671-680 (TGFPGAAGRT). Over residues 696 to 718 (GAAGKGDQGPVGRGETGAGGPPG) the composition is skewed to gly residues. 2 stretches are compositionally biased toward low complexity: residues 719-753 (FTGE…LGLP) and 761-771 (LPGVAGAVGEP). Residues 772-782 (GPLGIGPPGAR) are compositionally biased toward gly residues. Residues 791–806 (EPGPVGSVGPVGALGP) show a composition bias toward low complexity. A compositionally biased stretch (basic and acidic residues) spans 816–827 (RGDKGEPGEKGP). The segment covering 897 to 907 (PAGPPGPPGPP) has biased composition (pro residues).

It belongs to the fibrillar collagen family. As to quaternary structure, trimers of one alpha 2(I) and two alpha 1(I) chains. Interacts (via C-terminus) with TMEM131 (via PapD-L domain); the interaction is direct and is involved in assembly and TRAPPIII ER-to-Golgi transport complex-dependent secretion of collagen. In terms of processing, prolines at the third position of the tripeptide repeating unit (G-X-Y) are hydroxylated in some or all of the chains. As to expression, expressed in bones.

It is found in the secreted. The protein resides in the extracellular space. Its subcellular location is the extracellular matrix. Functionally, type I collagen is a member of group I collagen (fibrillar forming collagen). In Acratocnus sp. (strain SLP-2019) (Ground sloth), this protein is Collagen alpha-2(I) chain.